Here is a 92-residue protein sequence, read N- to C-terminus: Beta-2-microglobulin (92 aa).

In terms of domain architecture, Ig-like C1-type spans 2–91; it reads PQIQVYTRHP…VSMKEPKTVN (90 aa). A disulfide bridge connects residues Cys22 and Cys77.

The protein belongs to the beta-2-microglobulin family. In terms of assembly, heterodimer of an alpha chain and a beta chain. Beta-2-microglobulin is the beta-chain of major histocompatibility complex class I molecules.

It localises to the secreted. In terms of biological role, component of the class I major histocompatibility complex (MHC). Involved in the presentation of peptide antigens to the immune system. This chain is Beta-2-microglobulin (B2m), found in Mus caroli (Ryukyu mouse).